Consider the following 61-residue polypeptide: Short neurotoxin 1 (61 aa).

4 disulfide bridges follow: Cys-3–Cys-23, Cys-17–Cys-40, Cys-42–Cys-53, and Cys-54–Cys-59.

It belongs to the three-finger toxin family. Short-chain subfamily. Type I alpha-neurotoxin sub-subfamily. Expressed by the venom gland.

The protein resides in the secreted. Functionally, binds to muscle nicotinic acetylcholine receptor (nAChR) and inhibit acetylcholine from binding to the receptor, thereby impairing neuromuscular transmission. This chain is Short neurotoxin 1, found in Naja philippinensis (Philippine cobra).